We begin with the raw amino-acid sequence, 186 residues long: UPF0301 protein Swoo_1337 (186 aa).

It belongs to the UPF0301 (AlgH) family.

The protein is UPF0301 protein Swoo_1337 of Shewanella woodyi (strain ATCC 51908 / MS32).